Here is an 86-residue protein sequence, read N- to C-terminus: YcgL domain-containing protein XCC3997 (86 aa).

The YcgL domain occupies 1-83; that stretch reads MHAYVYKSQR…PKTVVLAGEC (83 aa).

This chain is YcgL domain-containing protein XCC3997, found in Xanthomonas campestris pv. campestris (strain ATCC 33913 / DSM 3586 / NCPPB 528 / LMG 568 / P 25).